Reading from the N-terminus, the 227-residue chain is DnaJ homolog subfamily B member 8 (227 aa).

Positions 3 to 69 constitute a J domain; sequence NYYEVLGVQS…KKRSVYDRAG (67 aa).

Interacts with histone deacetylases HDAC4, HDAC6, and SIRT2, HDAC activity is required for antiaggregation.

Efficient suppressor of aggregation and toxicity of disease-associated polyglutamine proteins. This Mus musculus (Mouse) protein is DnaJ homolog subfamily B member 8 (Dnajb8).